Here is a 507-residue protein sequence, read N- to C-terminus: Histidine ammonia-lyase (507 aa).

Positions 141–143 (ASG) form a cross-link, 5-imidazolinone (Ala-Gly). 2,3-didehydroalanine (Ser) is present on S142.

Belongs to the PAL/histidase family. Post-translationally, contains an active site 4-methylidene-imidazol-5-one (MIO), which is formed autocatalytically by cyclization and dehydration of residues Ala-Ser-Gly.

It localises to the cytoplasm. The enzyme catalyses L-histidine = trans-urocanate + NH4(+). It participates in amino-acid degradation; L-histidine degradation into L-glutamate; N-formimidoyl-L-glutamate from L-histidine: step 1/3. In Cereibacter sphaeroides (strain KD131 / KCTC 12085) (Rhodobacter sphaeroides), this protein is Histidine ammonia-lyase.